The chain runs to 493 residues: MIVIQLLIAASLILWIRFLWSRRKLYMLMMQLPGRMGLPLLGNSVRYLIISRGRMSSRTTYMDKHGSTYMAWIGTTPIVITRDPKIAEKVLTSPFCINRSSQTTNALALSMGYGLLTLQGSKWMARRKHMNPAFKHSVLLSFLPIFNAETDLLVSVFDSFVGQGEKDVLSDLIRWSFAIATQTTLGTDVTKDDNFENDAILKTYQSMLRLTIINIFVPFVQNKIVSKLFGLEWLRRRDASAINKMINNILDKKLNSNPENYCESELKTVIHRAIELFRNDEMSLMELGAECSSMVLAAFETSAHTVYYALVLLAMFPEHQEMVFNEIKEHFPLAKGIEVTHTDLQQLVYLDRVLNETLRLMPSVPFSSRETLEDLRLSNGVVIPKGMTISIDIFNTQRNTDYWGSEAAQFNPENFLPEKIHDRHPYAFIPFSKGKRNCIGWRYGLMSSKLALVKILRNYKLKTSFPYENLEFVDHMVIKLAQSPQLAFERRTL.

C438 lines the heme pocket.

This sequence belongs to the cytochrome P450 family. Requires heme as cofactor.

The protein resides in the endoplasmic reticulum membrane. It is found in the microsome membrane. In terms of biological role, may be involved in the metabolism of insect hormones and in the breakdown of synthetic insecticides. The protein is Probable cytochrome P450 313a2 (Cyp313a2) of Drosophila melanogaster (Fruit fly).